The following is an 87-amino-acid chain: UPF0237 protein YjhC (87 aa).

Positions 4-76 (VVTVVGADKI…EALGVNIHVQ (73 aa)) constitute an ACT domain.

It belongs to the UPF0237 family.

The protein is UPF0237 protein YjhC (yjhC) of Lactococcus lactis subsp. lactis (strain IL1403) (Streptococcus lactis).